A 202-amino-acid polypeptide reads, in one-letter code: Probable nicotinate-nucleotide adenylyltransferase (202 aa).

Belongs to the NadD family.

It catalyses the reaction nicotinate beta-D-ribonucleotide + ATP + H(+) = deamido-NAD(+) + diphosphate. It functions in the pathway cofactor biosynthesis; NAD(+) biosynthesis; deamido-NAD(+) from nicotinate D-ribonucleotide: step 1/1. Functionally, catalyzes the reversible adenylation of nicotinate mononucleotide (NaMN) to nicotinic acid adenine dinucleotide (NaAD). The chain is Probable nicotinate-nucleotide adenylyltransferase from Synechococcus sp. (strain JA-2-3B'a(2-13)) (Cyanobacteria bacterium Yellowstone B-Prime).